Consider the following 105-residue polypeptide: Met repressor (105 aa).

This sequence belongs to the MetJ family. As to quaternary structure, homodimer.

It localises to the cytoplasm. This regulatory protein, when combined with SAM (S-adenosylmethionine) represses the expression of the methionine regulon and of enzymes involved in SAM synthesis. This chain is Met repressor, found in Actinobacillus succinogenes (strain ATCC 55618 / DSM 22257 / CCUG 43843 / 130Z).